A 153-amino-acid polypeptide reads, in one-letter code: UPF0266 membrane protein YE1773 (153 aa).

Helical transmembrane passes span Ile6–Met26, Ile45–Asn65, and Glu67–Ile87.

The protein belongs to the UPF0266 family.

Its subcellular location is the cell inner membrane. The sequence is that of UPF0266 membrane protein YE1773 from Yersinia enterocolitica serotype O:8 / biotype 1B (strain NCTC 13174 / 8081).